The following is a 1380-amino-acid chain: DNA-directed RNA polymerase subunit beta (1380 aa).

Belongs to the RNA polymerase beta chain family. As to quaternary structure, the RNAP catalytic core consists of 2 alpha, 1 beta, 1 beta' and 1 omega subunit. When a sigma factor is associated with the core the holoenzyme is formed, which can initiate transcription.

It catalyses the reaction RNA(n) + a ribonucleoside 5'-triphosphate = RNA(n+1) + diphosphate. DNA-dependent RNA polymerase catalyzes the transcription of DNA into RNA using the four ribonucleoside triphosphates as substrates. The polypeptide is DNA-directed RNA polymerase subunit beta (Sinorhizobium medicae (strain WSM419) (Ensifer medicae)).